The chain runs to 320 residues: Malate dehydrogenase (320 aa).

NAD(+) contacts are provided by residues 10–15 (GSGMIG) and aspartate 34. Arginine 83 and arginine 89 together coordinate substrate. NAD(+) contacts are provided by residues asparagine 96 and 119–121 (ITN). Substrate-binding residues include asparagine 121 and arginine 152. Histidine 176 (proton acceptor) is an active-site residue.

This sequence belongs to the LDH/MDH superfamily. MDH type 3 family.

It carries out the reaction (S)-malate + NAD(+) = oxaloacetate + NADH + H(+). In terms of biological role, catalyzes the reversible oxidation of malate to oxaloacetate. This chain is Malate dehydrogenase, found in Bartonella henselae (strain ATCC 49882 / DSM 28221 / CCUG 30454 / Houston 1) (Rochalimaea henselae).